Consider the following 629-residue polypeptide: tRNA uridine 5-carboxymethylaminomethyl modification enzyme MnmG (629 aa).

13–18 (GGGHAG) is a binding site for FAD. NAD(+) is bound at residue 273–287 (GPRYCPSIEDKITRF).

It belongs to the MnmG family. As to quaternary structure, homodimer. Heterotetramer of two MnmE and two MnmG subunits. Requires FAD as cofactor.

The protein localises to the cytoplasm. Its function is as follows. NAD-binding protein involved in the addition of a carboxymethylaminomethyl (cmnm) group at the wobble position (U34) of certain tRNAs, forming tRNA-cmnm(5)s(2)U34. The protein is tRNA uridine 5-carboxymethylaminomethyl modification enzyme MnmG of Colwellia psychrerythraea (strain 34H / ATCC BAA-681) (Vibrio psychroerythus).